Consider the following 738-residue polypeptide: Glycogen [starch] synthase, muscle (738 aa).

Ser-8 is subject to Phosphoserine; by AMPK and PKA. Ser-11 is modified (phosphoserine). Lys-39 provides a ligand contact to UDP. Residues His-205 and Arg-211 each coordinate UDP-alpha-D-glucose. The alpha-D-glucose 6-phosphate site is built by His-291, Glu-292, Gln-294, His-297, and Lys-301. Arg-331 contributes to the UDP binding site. Residue Arg-331 coordinates UDP-alpha-D-glucose. Ser-412 is subject to Phosphoserine. Position 501 (His-501) interacts with alpha-D-glucose 6-phosphate. UDP-alpha-D-glucose is bound by residues Glu-510, Trp-512, and Gly-513. Thr-515 lines the UDP pocket. Alpha-D-glucose 6-phosphate-binding residues include Arg-582 and Arg-586. The disordered stretch occupies residues 632-738 (QGYRYPRPAS…PTSSLGEERN (107 aa)). Residue Ser-641 is modified to Phosphoserine; by DYRK2, GSK3-alpha, GSK3-beta and PASK. A phosphoserine mark is found at Ser-645, Ser-649, Ser-652, Ser-653, Ser-657, and Ser-672. Positions 658-681 (EDEEEPRDGPLGEDSERYDEEEEA) are enriched in acidic residues. Residues 682–695 (AKDRRNIRAPEWPR) are compositionally biased toward basic and acidic residues. A phosphoserine mark is found at Ser-698, Ser-709, and Ser-711. Residues 698–738 (SCSSSTGGSKRSNSVDTGPSSSLSTPTEPLSPTSSLGEERN) are compositionally biased toward low complexity. Phosphothreonine occurs at positions 722 and 724. Phosphoserine is present on residues Ser-728 and Ser-732.

It belongs to the glycosyltransferase 3 family. Part of the GYS1-GYG1 complex, a heterooctamer composed of a tetramer of GYS1 and 2 dimers of GYG1, where each GYS1 protomer binds to one GYG1 subunit (via GYG1 C-terminus); the GYS1 tetramer may dissociate from GYG1 dimers to continue glycogen polymerization on its own. Post-translationally, primed phosphorylation at Ser-657 (site 5) by CSNK2A1 and CSNK2A2 is required for inhibitory phosphorylation at Ser-641 (site 3a), Ser-645 (site 3b), Ser-649 (site 3c) and Ser-653 (site 4) by GSK3A an GSK3B. Phosphorylated at Ser-641 by PASK, leading to inactivation; phosphorylation by PASK is inhibited by glycogen. Phosphorylated at Ser-641 by DYRK2, leading to inactivation. Dephosphorylation at Ser-641 and Ser-645 by PP1 activates the enzyme. Phosphorylation at Ser-8 by AMPK inactivates the enzyme activity.

It carries out the reaction [(1-&gt;4)-alpha-D-glucosyl](n) + UDP-alpha-D-glucose = [(1-&gt;4)-alpha-D-glucosyl](n+1) + UDP + H(+). Its pathway is glycan biosynthesis; glycogen biosynthesis. With respect to regulation, allosteric activation by glucose-6-phosphate. Phosphorylation reduces the activity towards UDP-glucose. When in the non-phosphorylated state, glycogen synthase does not require glucose-6-phosphate as an allosteric activator; when phosphorylated it does. Glycogen synthase participates in the glycogen biosynthetic process along with glycogenin and glycogen branching enzyme. Extends the primer composed of a few glucose units formed by glycogenin by adding new glucose units to it. In this context, glycogen synthase transfers the glycosyl residue from UDP-Glc to the non-reducing end of alpha-1,4-glucan. The chain is Glycogen [starch] synthase, muscle (Gys1) from Mus musculus (Mouse).